The sequence spans 165 residues: MALNLSKKKTIVSKINQISNLALSAIIANSQGISVNKINELRKSGREIGVKMSIVRNTLLSLAIENTAFKCLKKKLKGSTFIAYSTKHPGSGARLFKEFEKKNKKFKITGAVFEGKLLSELEINQLADMPTYEEAIRKLLLTLKISIAGKLIYTLSAIKEKKETS.

This sequence belongs to the universal ribosomal protein uL10 family. As to quaternary structure, part of the ribosomal stalk of the 50S ribosomal subunit. The N-terminus interacts with L11 and the large rRNA to form the base of the stalk. The C-terminus forms an elongated spine to which L12 dimers bind in a sequential fashion forming a multimeric L10(L12)X complex.

Its function is as follows. Forms part of the ribosomal stalk, playing a central role in the interaction of the ribosome with GTP-bound translation factors. In Buchnera aphidicola subsp. Schizaphis graminum (strain Sg), this protein is Large ribosomal subunit protein uL10.